Consider the following 957-residue polypeptide: Glycine dehydrogenase (decarboxylating) (957 aa).

At Lys708 the chain carries N6-(pyridoxal phosphate)lysine.

Belongs to the GcvP family. In terms of assembly, the glycine cleavage system is composed of four proteins: P, T, L and H. Pyridoxal 5'-phosphate is required as a cofactor.

It carries out the reaction N(6)-[(R)-lipoyl]-L-lysyl-[glycine-cleavage complex H protein] + glycine + H(+) = N(6)-[(R)-S(8)-aminomethyldihydrolipoyl]-L-lysyl-[glycine-cleavage complex H protein] + CO2. In terms of biological role, the glycine cleavage system catalyzes the degradation of glycine. The P protein binds the alpha-amino group of glycine through its pyridoxal phosphate cofactor; CO(2) is released and the remaining methylamine moiety is then transferred to the lipoamide cofactor of the H protein. This Klebsiella pneumoniae (strain 342) protein is Glycine dehydrogenase (decarboxylating).